The sequence spans 152 residues: Non-specific lipid transfer protein GPI-anchored 8 (152 aa).

The signal sequence occupies residues methionine 1–alanine 23. 3 disulfides stabilise this stretch: cysteine 42–cysteine 56, cysteine 57–cysteine 98, and cysteine 70–cysteine 107. A glycan (N-linked (GlcNAc...) asparagine) is linked at asparagine 108. Serine 124 is lipidated: GPI-anchor amidated serine. A propeptide spans glycine 125 to isoleucine 152 (removed in mature form).

It belongs to the plant LTP family.

It is found in the cell membrane. In terms of biological role, probable lipid transfer protein. This is Non-specific lipid transfer protein GPI-anchored 8 from Arabidopsis thaliana (Mouse-ear cress).